A 435-amino-acid polypeptide reads, in one-letter code: Serine--tRNA ligase (435 aa).

A disordered region spans residues 48–68 (MKAQRNEASKKIGEAKRNGES). Residues 49–68 (KAQRNEASKKIGEAKRNGES) are compositionally biased toward basic and acidic residues. 230–232 (TAE) lines the L-serine pocket. 261–263 (RSE) is a binding site for ATP. Residue Glu284 coordinates L-serine. 348-351 (EVSS) is a binding site for ATP. An L-serine-binding site is contributed by Ser383.

It belongs to the class-II aminoacyl-tRNA synthetase family. Type-1 seryl-tRNA synthetase subfamily. In terms of assembly, homodimer. The tRNA molecule binds across the dimer.

The protein localises to the cytoplasm. It carries out the reaction tRNA(Ser) + L-serine + ATP = L-seryl-tRNA(Ser) + AMP + diphosphate + H(+). It catalyses the reaction tRNA(Sec) + L-serine + ATP = L-seryl-tRNA(Sec) + AMP + diphosphate + H(+). Its pathway is aminoacyl-tRNA biosynthesis; selenocysteinyl-tRNA(Sec) biosynthesis; L-seryl-tRNA(Sec) from L-serine and tRNA(Sec): step 1/1. Its function is as follows. Catalyzes the attachment of serine to tRNA(Ser). Is also able to aminoacylate tRNA(Sec) with serine, to form the misacylated tRNA L-seryl-tRNA(Sec), which will be further converted into selenocysteinyl-tRNA(Sec). This Limosilactobacillus reuteri (strain DSM 20016) (Lactobacillus reuteri) protein is Serine--tRNA ligase.